Consider the following 489-residue polypeptide: NADH-quinone oxidoreductase subunit N (489 aa).

14 consecutive transmembrane segments (helical) span residues 6–26 (VLFIAELPLLLTALTAIAVML), 37–57 (VFYITVIGLNAALFSLLPASS), 66–86 (LLIVDSYSVFYSALILIGSLA), 105–125 (FYLLLSLASTGAMVMAQAHHL), 127–147 (AIFIGVELMSLPLFGLVGYAF), 159–179 (YMVLSASATAFLLFGIALIYA), 204–224 (ITLLIVGLGMVVIGFGFKLSL), 239–259 (PAPVTTYLATVSKIAVFAVLL), 271–291 (FFYSLLGGLAFISIIIGNLLA), 299–319 (RLLGFSSTAHFGYLLVALIAC), 329–349 (VALYLVMYLLTSVGSFGVVSL), 377–397 (SAMTIMFLSLAGIPMTLGFIG), 408–430 (FHLWWLTGAVVFGSAVGLYYYLR), and 452–472 (ALTTGGFMVLTSAILVVLLGI).

This sequence belongs to the complex I subunit 2 family. As to quaternary structure, NDH-1 is composed of 14 different subunits. Subunits NuoA, H, J, K, L, M, N constitute the membrane sector of the complex.

The protein resides in the cell inner membrane. It catalyses the reaction a quinone + NADH + 5 H(+)(in) = a quinol + NAD(+) + 4 H(+)(out). NDH-1 shuttles electrons from NADH, via FMN and iron-sulfur (Fe-S) centers, to quinones in the respiratory chain. The immediate electron acceptor for the enzyme in this species is believed to be ubiquinone. Couples the redox reaction to proton translocation (for every two electrons transferred, four hydrogen ions are translocated across the cytoplasmic membrane), and thus conserves the redox energy in a proton gradient. The chain is NADH-quinone oxidoreductase subunit N from Tolumonas auensis (strain DSM 9187 / NBRC 110442 / TA 4).